Here is a 296-residue protein sequence, read N- to C-terminus: Pantothenate synthetase (296 aa).

31–38 (MGYLHEGH) provides a ligand contact to ATP. H38 functions as the Proton donor in the catalytic mechanism. Q62 contributes to the (R)-pantoate binding site. Q62 provides a ligand contact to beta-alanine. 148–151 (GEKD) contacts ATP. Q154 is a binding site for (R)-pantoate. Residues V177 and 185–188 (LSSR) contribute to the ATP site.

It belongs to the pantothenate synthetase family. Homodimer.

The protein localises to the cytoplasm. It carries out the reaction (R)-pantoate + beta-alanine + ATP = (R)-pantothenate + AMP + diphosphate + H(+). It participates in cofactor biosynthesis; (R)-pantothenate biosynthesis; (R)-pantothenate from (R)-pantoate and beta-alanine: step 1/1. In terms of biological role, catalyzes the condensation of pantoate with beta-alanine in an ATP-dependent reaction via a pantoyl-adenylate intermediate. The sequence is that of Pantothenate synthetase from Deinococcus geothermalis (strain DSM 11300 / CIP 105573 / AG-3a).